The chain runs to 315 residues: Olfactory receptor 4E1 (315 aa).

Residues 1–33 (MEEAILLNQTSLVTYFRLRGLSVNHKARIAMFS) lie on the Extracellular side of the membrane. An N-linked (GlcNAc...) asparagine glycan is attached at Asn-8. A helical membrane pass occupies residues 34-54 (MFLIFYVLTLIGNVLIVITII). Residues 55–61 (YDHRLHT) lie on the Cytoplasmic side of the membrane. A helical transmembrane segment spans residues 62–82 (PMYFFLSNLSFIDVCHSTVTV). Over 83 to 101 (PKMLRDVWSEEKLISFDAC) the chain is Extracellular. Cys-101 and Cys-183 are oxidised to a cystine. Residues 102–122 (VTQMFFLHLFACTEIFLLTVM) form a helical membrane-spanning segment. The Cytoplasmic portion of the chain corresponds to 123–143 (AYDRYVAICKPLQYMIVMNWK). The chain crosses the membrane as a helical span at residues 144-164 (VCVLLAVALWTGGTIHSIALT). The Extracellular segment spans residues 165-208 (SLTIKLPYCGPDEIDNFFCDVPQVIKLACIDTHVIEILIVSNSG). The chain crosses the membrane as a helical span at residues 209–229 (LISVVCFVVLVVSYAVILVSL). Residues 230–240 (RQQISKGKRKA) lie on the Cytoplasmic side of the membrane. Residues 241 to 261 (LSTCAAHLTVVTLFLGHCIFI) form a helical membrane-spanning segment. Over 262 to 272 (YSRPSTSLPED) the chain is Extracellular. The helical transmembrane segment at 273 to 293 (KVVSVFFTAVTPLLNPIIYTL) threads the bilayer. The Cytoplasmic segment spans residues 294-315 (RNEEMKSALNKLVGRKERKEEK).

The protein belongs to the G-protein coupled receptor 1 family.

The protein resides in the cell membrane. Odorant receptor. In Homo sapiens (Human), this protein is Olfactory receptor 4E1 (OR4E1).